A 185-amino-acid polypeptide reads, in one-letter code: CASP-like protein SELMODRAFT_413556 (185 aa).

Residues 1–89 are Cytoplasmic-facing; it reads MATLPLSLIF…AVTVLFYLAK (89 aa). A helical transmembrane segment spans residues 90-110; that stretch reads LVFGILGLALSIIWLLHIIVF. Residues 111-131 are Extracellular-facing; the sequence is MLVNPPAFPFLNQVFIQLDSA. The helical transmembrane segment at 132–152 threads the bilayer; it reads WGLLGTTAFAIFCYYLIMSVI. Over 153 to 163 the chain is Cytoplasmic; sequence SGEMHSIHPMK. A helical transmembrane segment spans residues 164 to 184; it reads YQGTLMNSFLFNVAIILLCST. Residue Arg-185 is a topological domain, extracellular.

The protein belongs to the Casparian strip membrane proteins (CASP) family. As to quaternary structure, homodimer and heterodimers.

The protein localises to the cell membrane. The polypeptide is CASP-like protein SELMODRAFT_413556 (Selaginella moellendorffii (Spikemoss)).